The primary structure comprises 448 residues: Phosphohexose mutases (448 aa).

Serine 97 functions as the Phosphoserine intermediate in the catalytic mechanism. Positions 97, 237, 239, and 241 each coordinate Mg(2+).

Belongs to the phosphohexose mutase family. Mg(2+) is required as a cofactor.

It carries out the reaction alpha-D-glucose 1-phosphate = alpha-D-glucose 6-phosphate. The enzyme catalyses alpha-D-mannose 1-phosphate = D-mannose 6-phosphate. The protein operates within nucleotide-sugar biosynthesis; GDP-alpha-D-mannose biosynthesis; alpha-D-mannose 1-phosphate from D-fructose 6-phosphate: step 2/2. Involved in xanthan production. This is Phosphohexose mutases (xanA) from Xanthomonas campestris pv. campestris (strain ATCC 33913 / DSM 3586 / NCPPB 528 / LMG 568 / P 25).